Reading from the N-terminus, the 501-residue chain is MAAAAAAVNGSLDRLDVHERKAQKSYWEEHSGELNLEAIMLDSRAAELDKEERPEVLSLLPSYEGKSILELGAGIGRFTGELAKTSGHVFAVDFVESVIKKNGSINDHYGNTSFMCADVTSTDLMIEANSIDLIFSNWLLMYLSDEEIDKLVERMVKWLKVGGYIFFRESCFHQTGDTERKFNPTHYREPRFYTKVFKECQTFNQDGTSFKLSLITFKCIGAYVNIKKDQNQICWLWKKVNSSEDGGFQSFLDNVQYKATGILRYERIFGDGYVSTGGAETTKEFVEKLNLKPGQKVLDVGCGIGGGDFYMAEKYGTHVVGIDLSINMIMFALERSIGCKCLVEFEVADCTTKTYPDHMFDVIYSRDTILHIQDKPSLFKSFFKWLKPGGKVLISDYCKSPGKPSEEFATYIKQRGYDLHDVEAYGQMLKNAGFSHVIAEDRTDQFLSVLQKELDKFEKNKDDFLSEFAQEDYDDIVNGWKAKLQRSSAGEQRWGLFVATK.

S-adenosyl-L-homocysteine-binding residues include G72, R77, D93, D118, V119, and N137. 5 residues coordinate phosphocholine: S170, T175, G176, R180, and Y187. Residues 256-257 (QY) and Y265 each bind N-methylethanolamine phosphate. Residue Y265 coordinates phosphocholine. S-adenosyl-L-homocysteine-binding residues include V274, S275, G301, D323, D349, C350, and R366. Phosphocholine-binding residues include Y397, Y411, R415, Y417, and K483. N-methylethanolamine phosphate-binding positions include Y397, Y411, 415–417 (RGY), and K483.

This sequence belongs to the class I-like SAM-binding methyltransferase superfamily. PEAMT family.

It carries out the reaction phosphoethanolamine + S-adenosyl-L-methionine = N-methylethanolamine phosphate + S-adenosyl-L-homocysteine + H(+). The catalysed reaction is N-methylethanolamine phosphate + S-adenosyl-L-methionine = N,N-dimethylethanolamine phosphate + S-adenosyl-L-homocysteine + H(+). It catalyses the reaction N,N-dimethylethanolamine phosphate + S-adenosyl-L-methionine = phosphocholine + S-adenosyl-L-homocysteine + H(+). Its pathway is phospholipid metabolism; phosphatidylcholine biosynthesis; phosphocholine from phosphoethanolamine: step 1/1. Its function is as follows. Involved in phosphocholine biosynthesis. Catalyzes the N-methylation of phosphoethanolamine, phosphomonomethylethanolamine and phosphodimethylethanolamine, the three methylation steps required to convert phosphoethanolamine to phosphocholine (PC). May be involved in root development. This Zea mays (Maize) protein is Phosphoethanolamine N-methyltransferase 1.